Here is a 245-residue protein sequence, read N- to C-terminus: 1-(5-phosphoribosyl)-5-[(5-phosphoribosylamino)methylideneamino] imidazole-4-carboxamide isomerase (245 aa).

The active-site Proton acceptor is the Asp-7. Asp-129 (proton donor) is an active-site residue.

Belongs to the HisA/HisF family.

The protein localises to the cytoplasm. The enzyme catalyses 1-(5-phospho-beta-D-ribosyl)-5-[(5-phospho-beta-D-ribosylamino)methylideneamino]imidazole-4-carboxamide = 5-[(5-phospho-1-deoxy-D-ribulos-1-ylimino)methylamino]-1-(5-phospho-beta-D-ribosyl)imidazole-4-carboxamide. The protein operates within amino-acid biosynthesis; L-histidine biosynthesis; L-histidine from 5-phospho-alpha-D-ribose 1-diphosphate: step 4/9. This is 1-(5-phosphoribosyl)-5-[(5-phosphoribosylamino)methylideneamino] imidazole-4-carboxamide isomerase from Buchnera aphidicola subsp. Cinara cedri (strain Cc).